Consider the following 555-residue polypeptide: Urocanate hydratase (555 aa).

NAD(+)-binding positions include G52–G53, Q130, G176–G178, E196, R201, N242–A243, Q263–H267, Y273–L274, and Y322. C410 is an active-site residue. G492 is an NAD(+) binding site.

This sequence belongs to the urocanase family. NAD(+) is required as a cofactor.

The protein resides in the cytoplasm. It carries out the reaction 4-imidazolone-5-propanoate = trans-urocanate + H2O. It functions in the pathway amino-acid degradation; L-histidine degradation into L-glutamate; N-formimidoyl-L-glutamate from L-histidine: step 2/3. Catalyzes the conversion of urocanate to 4-imidazolone-5-propionate. The polypeptide is Urocanate hydratase (Shewanella baltica (strain OS185)).